The primary structure comprises 56 residues: Small ribosomal subunit protein uS14 (56 aa).

Zn(2+) contacts are provided by Cys-21, Cys-24, Cys-39, and Cys-42.

It belongs to the universal ribosomal protein uS14 family. In terms of assembly, component of the 40S small ribosomal subunit. The cofactor is Zn(2+).

The protein resides in the cytoplasm. The protein localises to the cytosol. Its subcellular location is the rough endoplasmic reticulum. In Spodoptera frugiperda (Fall armyworm), this protein is Small ribosomal subunit protein uS14 (RpS29).